We begin with the raw amino-acid sequence, 340 residues long: Glycerol-3-phosphate dehydrogenase [NAD(P)+] (340 aa).

Residues Ser14, Phe15, Arg35, and Lys108 each coordinate NADPH. Sn-glycerol 3-phosphate-binding residues include Lys108 and Gly136. An NADPH-binding site is contributed by Ala140. Positions 191, 244, 254, 255, and 256 each coordinate sn-glycerol 3-phosphate. Lys191 (proton acceptor) is an active-site residue. Arg255 is an NADPH binding site. Positions 279 and 281 each coordinate NADPH.

This sequence belongs to the NAD-dependent glycerol-3-phosphate dehydrogenase family.

The protein localises to the cytoplasm. The enzyme catalyses sn-glycerol 3-phosphate + NAD(+) = dihydroxyacetone phosphate + NADH + H(+). The catalysed reaction is sn-glycerol 3-phosphate + NADP(+) = dihydroxyacetone phosphate + NADPH + H(+). It participates in membrane lipid metabolism; glycerophospholipid metabolism. Its function is as follows. Catalyzes the reduction of the glycolytic intermediate dihydroxyacetone phosphate (DHAP) to sn-glycerol 3-phosphate (G3P), the key precursor for phospholipid synthesis. The chain is Glycerol-3-phosphate dehydrogenase [NAD(P)+] from Ectopseudomonas mendocina (strain ymp) (Pseudomonas mendocina).